Here is a 342-residue protein sequence, read N- to C-terminus: Renalase (342 aa).

A signal peptide spans 1-17 (MSRVLVVGAGLTGSLCA). FAD-binding positions include Thr12, Arg42, and 61–62 (QY).

The protein belongs to the renalase family. FAD is required as a cofactor. As to expression, expressed predominantly in kidney and testis with lower levels in liver, heart and embryo and weak expression in brain and skeletal muscle.

The protein resides in the secreted. It catalyses the reaction 1,2-dihydro-beta-NAD + O2 + H(+) = H2O2 + NAD(+). The enzyme catalyses 1,2-dihydro-beta-NADP + O2 + H(+) = H2O2 + NADP(+). It carries out the reaction 1,6-dihydro-beta-NADP + O2 + H(+) = H2O2 + NADP(+). The catalysed reaction is 1,6-dihydro-beta-NAD + O2 + H(+) = H2O2 + NAD(+). In terms of biological role, catalyzes the oxidation of the less abundant 1,2-dihydro-beta-NAD(P) and 1,6-dihydro-beta-NAD(P) to form beta-NAD(P)(+). The enzyme hormone is secreted by the kidney, and circulates in blood and modulates cardiac function and systemic blood pressure. Lowers blood pressure in vivo by decreasing cardiac contractility and heart rate and preventing a compensatory increase in peripheral vascular tone, suggesting a causal link to the increased plasma catecholamine and heightened cardiovascular risk. High concentrations of catecholamines activate plasma renalase and promotes its secretion and synthesis. This Mus musculus (Mouse) protein is Renalase.